A 359-amino-acid chain; its full sequence is ATP synthase subunit gamma, chloroplastic (359 aa).

Residues 1 to 35 (MSCSHLSTAWSSSALASSASTTRRRSPPRSGLLVR) constitute a chloroplast transit peptide. Cys124 is a catalytic residue. Cys234 and Cys240 are oxidised to a cystine.

This sequence belongs to the ATPase gamma chain family. F-type ATPases have 2 components, CF(1) - the catalytic core - and CF(0) - the membrane proton channel. CF(1) has five subunits: alpha(3), beta(3), gamma(1), delta(1), epsilon(1). CF(0) has four main subunits: a, b, b' and c.

The protein localises to the plastid. The protein resides in the chloroplast thylakoid membrane. Functionally, produces ATP from ADP in the presence of a proton gradient across the membrane. The gamma chain is believed to be important in regulating ATPase activity and the flow of protons through the CF(0) complex. Inceptin is a proteolytic fragment produced by insect larvae that previously ingested the protein. This peptide mediate plant perception of herbivory through the induction of volatile, phenylpropanoid and protease inhibitor defenses such as ethylene, jasmonic acid and salicylic acid for example. The sequence is that of ATP synthase subunit gamma, chloroplastic from Zea mays (Maize).